The sequence spans 306 residues: Mycothiol acetyltransferase (306 aa).

N-acetyltransferase domains follow at residues 5–157 (EIYE…EPAA) and 159–306 (ITIR…HKKL). A 1D-myo-inositol 2-(L-cysteinylamino)-2-deoxy-alpha-D-glucopyranoside-binding site is contributed by Glu36. 82-84 (MLV) contacts acetyl-CoA. 1D-myo-inositol 2-(L-cysteinylamino)-2-deoxy-alpha-D-glucopyranoside contacts are provided by Asp186, Lys227, and Glu238. Residue 242–244 (LGV) coordinates acetyl-CoA. Residue Tyr276 coordinates 1D-myo-inositol 2-(L-cysteinylamino)-2-deoxy-alpha-D-glucopyranoside. 281–286 (NVRAVR) contacts acetyl-CoA.

It belongs to the acetyltransferase family. MshD subfamily. In terms of assembly, monomer.

It catalyses the reaction 1D-myo-inositol 2-(L-cysteinylamino)-2-deoxy-alpha-D-glucopyranoside + acetyl-CoA = mycothiol + CoA + H(+). Catalyzes the transfer of acetyl from acetyl-CoA to desacetylmycothiol (Cys-GlcN-Ins) to form mycothiol. The sequence is that of Mycothiol acetyltransferase from Stackebrandtia nassauensis (strain DSM 44728 / CIP 108903 / NRRL B-16338 / NBRC 102104 / LLR-40K-21).